A 309-amino-acid chain; its full sequence is MSAEGVEKLSLEIAASEEESVAPTEQQDVACGLENLPVSLWPLGAEPRPKPFQYTPDHVAGPGADIDPTQITFPGCACIETPCVPGTCSCLRHENNYDDNLCLRDVGSEGKYAKPVFECNVLCQCGMRCRNRVVQNGLHFLLQVFQTEKKGWGLRTLEFIPKGRFVCEYAGEVLGFSEVQRRIHLQTSHDSNYIIAVREHIYSGQIMETFVDPTYIGNIGRFLNHSCEPNLLMIPVRIDSMVPKLALFAAKDILPGEELSYDYSGRFLNQVSSKDKEKIDCSPPRKPCYCGAQSCTTFLPYDSSLYMAP.

The Pre-SET domain maps to 74 to 137; that stretch reads PGCACIETPC…RCRNRVVQNG (64 aa). Cys-76, Cys-78, Cys-83, Cys-88, Cys-90, Cys-119, Cys-123, Cys-125, and Cys-129 together coordinate Zn(2+). An SET domain is found at 140–264; sequence FLLQVFQTEK…PGEELSYDYS (125 aa). S-adenosyl-L-methionine-binding positions include 150-152, Tyr-193, Arg-221, and 224-225; these read KGW and NH. Zn(2+) contacts are provided by Cys-227, Cys-288, Cys-290, and Cys-295. The Post-SET domain maps to 284-300; the sequence is PRKPCYCGAQSCTTFLP.

This sequence belongs to the class V-like SAM-binding methyltransferase superfamily.

It is found in the nucleus. Its subcellular location is the chromosome. The enzyme catalyses L-lysyl(36)-[histone H3] + 2 S-adenosyl-L-methionine = N(6),N(6)-dimethyl-L-lysyl(36)-[histone H3] + 2 S-adenosyl-L-homocysteine + 2 H(+). In terms of biological role, histone methyltransferase that methylates 'Lys-4' and 'Lys-36' of histone H3, 2 specific tags for epigenetic transcriptional activation. Specifically mediates dimethylation of H3 'Lys-36'. The polypeptide is Histone-lysine N-methyltransferase SETMAR (Mus musculus (Mouse)).